We begin with the raw amino-acid sequence, 310 residues long: Tyrosine recombinase XerC (310 aa).

The Core-binding (CB) domain maps to 11–97 (NSLQKPLERF…SLRSFFDFLI (87 aa)). In terms of domain architecture, Tyr recombinase spans 118 to 298 (PLPKNLDVDE…DFQHLAQAYD (181 aa)). Active-site residues include arginine 157, lysine 181, histidine 250, arginine 253, and histidine 276. Catalysis depends on tyrosine 285, which acts as the O-(3'-phospho-DNA)-tyrosine intermediate.

This sequence belongs to the 'phage' integrase family. XerC subfamily. In terms of assembly, forms a cyclic heterotetrameric complex composed of two molecules of XerC and two molecules of XerD.

The protein resides in the cytoplasm. In terms of biological role, site-specific tyrosine recombinase, which acts by catalyzing the cutting and rejoining of the recombining DNA molecules. The XerC-XerD complex is essential to convert dimers of the bacterial chromosome into monomers to permit their segregation at cell division. It also contributes to the segregational stability of plasmids. The protein is Tyrosine recombinase XerC of Vibrio parahaemolyticus serotype O3:K6 (strain RIMD 2210633).